The following is a 183-amino-acid chain: Photosystem I assembly protein Ycf4 (183 aa).

The next 2 membrane-spanning stretches (helical) occupy residues 21-43 (YWWA…SSRL) and 58-80 (FIPQ…TYLW).

It belongs to the Ycf4 family.

It is found in the plastid. The protein resides in the chloroplast thylakoid membrane. In terms of biological role, seems to be required for the assembly of the photosystem I complex. This chain is Photosystem I assembly protein Ycf4, found in Nephroselmis olivacea (Green alga).